Here is a 1334-residue protein sequence, read N- to C-terminus: Adenylate cyclase type 9 (1334 aa).

2 disordered regions span residues 1–28 and 49–71; these read MASP…SNSV and ISSS…GLRR. Residues 1–113 lie on the Cytoplasmic side of the membrane; that stretch reads MASPPHQQLL…CFPQTQRRFR (113 aa). The span at 16–28 shows a compositional bias: polar residues; that stretch reads EVSCDSSGDSNSV. Residues 57–69 show a composition bias toward gly residues; the sequence is ESGGVGRGGGGGL. A helical transmembrane segment spans residues 114–134; it reads YALFYIGSACLLWGIYFGVHM. The Extracellular segment spans residues 135-137; the sequence is REK. A helical membrane pass occupies residues 138 to 158; that stretch reads QMVFMVPALCFLLVCVAFFAF. Over 159-167 the chain is Cytoplasmic; sequence TFTKAYARR. The chain crosses the membrane as a helical span at residues 168-187; that stretch reads YVWTSGYTLLVFALTLAPQF. The Extracellular segment spans residues 188 to 207; that stretch reads QPWTLGERQRVQPRPAAPVD. The helical transmembrane segment at 208-227 threads the bilayer; sequence TCLSQVGSFSMCVEVLLLLY. At 228–233 the chain is on the cytoplasmic side; sequence TVMHLP. Residues 234 to 250 traverse the membrane as a helical segment; sequence LYLSLFLGLSYSVLFET. Residues 251-269 lie on the Extracellular side of the membrane; that stretch reads SAFRDESCTLLGGGAVYWE. A helical transmembrane segment spans residues 270–290; it reads LLSKAFLHVCIHAIGIHLFIM. Topologically, residues 291–768 are cytoplasmic; the sequence is SEVRSRSTFL…VKTFASATFS (478 aa). A disordered region spans residues 338–363; the sequence is QGDDESENSVKRHSTSSPKNRKKKPS. Residues 348-363 show a composition bias toward basic residues; it reads KRHSTSSPKNRKKKPS. Positions 388, 389, and 432 each coordinate Mg(2+). Residues 388–393, 430–432, and Arg-476 contribute to the ATP site; these read DIVGFT and LGD. A disordered region spans residues 635–670; the sequence is GCQDEHKNSTKAPGGHSPKTQNGLLSPPQEEKLSNS. Residues 769-789 form a helical membrane-spanning segment; the sequence is SLLDVFLSTTVFLILSVTCFL. Residues 790–800 lie on the Extracellular side of the membrane; that stretch reads KHGMVASPPPP. The helical transmembrane segment at 801 to 821 threads the bilayer; that stretch reads AAVVVFVIAILLEVLSLVISV. Over 822–849 the chain is Cytoplasmic; the sequence is RMVFFLEEVMACTKRLLELISGWLPRHF. A helical membrane pass occupies residues 850-870; it reads LGAILVSLPALAVFSHFTSDF. Topologically, residues 871-873 are extracellular; that stretch reads ETN. Residues 874 to 894 traverse the membrane as a helical segment; that stretch reads IHYTMFMCCAILIAIVQYCNF. The Cytoplasmic segment spans residues 895 to 902; sequence CQLSSWMR. Residues 903 to 923 traverse the membrane as a helical segment; sequence SLLATVVGAVLLILLYVSLCP. Residues 924–957 lie on the Extracellular side of the membrane; that stretch reads DSSVETLHLDLAQNLSSRKSPCNSSMPADVKRPA. Asn-937 and Asn-946 each carry an N-linked (GlcNAc...) asparagine glycan. Residues 958-978 form a helical membrane-spanning segment; that stretch reads DLIGQEVILAVFLLLLLVWFL. Residues 979-1334 lie on the Cytoplasmic side of the membrane; sequence NRSFEVSYRL…LTKLNVSKSV (356 aa). ATP is bound by residues Lys-1090, 1167–1169, 1174–1178, and Lys-1214; these read DIW and NIASR. A disordered region spans residues 1266-1303; the sequence is SVQNSDKTAHATDNSETKDALPSSKKLQKEPTKAEERC. 2 stretches are compositionally biased toward basic and acidic residues: residues 1272–1284 and 1292–1303; these read KTAH…ETKD and LQKEPTKAEERC.

Belongs to the adenylyl cyclase class-4/guanylyl cyclase family. The cofactor is Mg(2+). It depends on Mn(2+) as a cofactor. As to expression, detected in embryonic heart (at protein level).

It localises to the cell membrane. It is found in the membrane. It carries out the reaction ATP = 3',5'-cyclic AMP + diphosphate. Insensitive to calcium/calmodulin, forskolin and somatostatin. Stimulated by beta-adrenergic receptor activation. Activity is down-regulated by calcium/calcineurin. Adenylyl cyclase that catalyzes the formation of the signaling molecule cAMP in response to activation of G protein-coupled receptors. In Gallus gallus (Chicken), this protein is Adenylate cyclase type 9 (ADCY9).